We begin with the raw amino-acid sequence, 552 residues long: 5'-AMP-activated protein kinase catalytic subunit alpha-2 (552 aa).

The 253-residue stretch at Tyr16–Phe268 folds into the Protein kinase domain. ATP contacts are provided by residues Leu22–Val30 and Lys45. Catalysis depends on Asp139, which acts as the Proton acceptor. Thr172 is subject to Phosphothreonine; by LKB1 and CaMKK2. Thr258 is subject to Phosphothreonine. The segment at Glu291–Asp376 is AIS. Position 377 is a phosphoserine (Ser377). A disordered region spans residues Val477–Thr521. Over residues Arg480–Cys490 the composition is skewed to polar residues. Ser491 carries the phosphoserine modification. Polar residues predominate over residues Ser501–His510. Residues Ser511–Thr521 are compositionally biased toward low complexity.

The protein belongs to the protein kinase superfamily. CAMK Ser/Thr protein kinase family. SNF1 subfamily. As to quaternary structure, AMPK is a heterotrimer of an alpha catalytic subunit (PRKAA1 or PRKAA2), a beta (PRKAB1 or PRKAB2) and a gamma non-catalytic subunits (PRKAG1, PRKAG2 or PRKAG3). Interacts with FNIP1 and FNIP2. Associates with internalized insulin receptor/INSR complexes on Golgi/endosomal membranes; PRKAA2/AMPK2 together with ATIC and HACD3/PTPLAD1 is proposed to be part of a signaling network regulating INSR autophosphorylation and endocytosis. Interacts with ARF6. The phosphorylated form at Thr-172 mediated by CamKK2 interacts with ACSS2. Requires Mg(2+) as cofactor. Ubiquitinated. In terms of processing, phosphorylated at Thr-172 by STK11/LKB1 in complex with STE20-related adapter-alpha (STRADA) pseudo kinase and CAB39. Also phosphorylated at Thr-172 by CAMKK2; triggered by a rise in intracellular calcium ions, without detectable changes in the AMP/ATP ratio. CAMKK1 can also phosphorylate Thr-172, but at much lower level. Dephosphorylated by protein phosphatase 2A and 2C (PP2A and PP2C). Phosphorylated by ULK1; leading to negatively regulate AMPK activity and suggesting the existence of a regulatory feedback loop between ULK1 and AMPK. Dephosphorylated by PPM1A and PPM1B at Thr-172 (mediated by STK11/LKB1).

The protein resides in the cytoplasm. It localises to the nucleus. The enzyme catalyses L-seryl-[protein] + ATP = O-phospho-L-seryl-[protein] + ADP + H(+). It catalyses the reaction L-threonyl-[protein] + ATP = O-phospho-L-threonyl-[protein] + ADP + H(+). The catalysed reaction is L-seryl-[acetyl-CoA carboxylase] + ATP = O-phospho-L-seryl-[acetyl-CoA carboxylase] + ADP + H(+). It carries out the reaction L-seryl-[3-hydroxy-3-methylglutaryl-coenzyme A reductase] + ATP = O-phospho-L-seryl-[3-hydroxy-3-methylglutaryl-coenzyme A reductase] + ADP + H(+). With respect to regulation, activated by phosphorylation on Thr-172. Binding of AMP to non-catalytic gamma subunit (PRKAG1, PRKAG2 or PRKAG3) results in allosteric activation, inducing phosphorylation on Thr-172. AMP-binding to gamma subunit also sustains activity by preventing dephosphorylation of Thr-172. ADP also stimulates Thr-172 phosphorylation, without stimulating already phosphorylated AMPK. ATP promotes dephosphorylation of Thr-172, rendering the enzyme inactive. Under physiological conditions AMPK mainly exists in its inactive form in complex with ATP, which is much more abundant than AMP. AMPK is activated by antihyperglycemic drug metformin, a drug prescribed to patients with type 2 diabetes: in vivo, metformin seems to mainly inhibit liver gluconeogenesis. However, metformin can be used to activate AMPK in muscle and other cells in culture or ex vivo. Selectively inhibited by compound C (6-[4-(2-Piperidin-1-yl-ethoxy)-phenyl)]-3-pyridin-4-yl-pyyrazolo[1,5-a] pyrimidine. Activated by resveratrol, a natural polyphenol present in red wine, and S17834, a synthetic polyphenol. Salicylate/aspirin directly activates kinase activity, primarily by inhibiting Thr-172 dephosphorylation. Functionally, catalytic subunit of AMP-activated protein kinase (AMPK), an energy sensor protein kinase that plays a key role in regulating cellular energy metabolism. In response to reduction of intracellular ATP levels, AMPK activates energy-producing pathways and inhibits energy-consuming processes: inhibits protein, carbohydrate and lipid biosynthesis, as well as cell growth and proliferation. AMPK acts via direct phosphorylation of metabolic enzymes, and by longer-term effects via phosphorylation of transcription regulators. Regulates lipid synthesis by phosphorylating and inactivating lipid metabolic enzymes such as ACACA, ACACB, GYS1, HMGCR and LIPE; regulates fatty acid and cholesterol synthesis by phosphorylating acetyl-CoA carboxylase (ACACA and ACACB) and hormone-sensitive lipase (LIPE) enzymes, respectively. Promotes lipolysis of lipid droplets by mediating phosphorylation of isoform 1 of CHKA (CHKalpha2). Regulates insulin-signaling and glycolysis by phosphorylating IRS1, PFKFB2 and PFKFB3. Involved in insulin receptor/INSR internalization. AMPK stimulates glucose uptake in muscle by increasing the translocation of the glucose transporter SLC2A4/GLUT4 to the plasma membrane, possibly by mediating phosphorylation of TBC1D4/AS160. Regulates transcription and chromatin structure by phosphorylating transcription regulators involved in energy metabolism such as CRTC2/TORC2, FOXO3, histone H2B, HDAC5, MEF2C, MLXIPL/ChREBP, EP300, HNF4A, p53/TP53, SREBF1, SREBF2 and PPARGC1A. Acts as a key regulator of glucose homeostasis in liver by phosphorylating CRTC2/TORC2, leading to CRTC2/TORC2 sequestration in the cytoplasm. In response to stress, phosphorylates 'Ser-36' of histone H2B (H2BS36ph), leading to promote transcription. Acts as a key regulator of cell growth and proliferation by phosphorylating FNIP1, TSC2, RPTOR, WDR24 and ATG1/ULK1: in response to nutrient limitation, negatively regulates the mTORC1 complex by phosphorylating RPTOR component of the mTORC1 complex and by phosphorylating and activating TSC2. Also phosphorylates and inhibits GATOR2 subunit WDR24 in response to nutrient limitation, leading to suppress glucose-mediated mTORC1 activation. In response to energetic stress, phosphorylates FNIP1, inactivating the non-canonical mTORC1 signaling, thereby promoting nuclear translocation of TFEB and TFE3, and inducing transcription of lysosomal or autophagy genes. In response to nutrient limitation, promotes autophagy by phosphorylating and activating ATG1/ULK1. In that process, it also activates WDR45/WIPI4. Phosphorylates CASP6, thereby preventing its autoprocessing and subsequent activation. AMPK also acts as a regulator of circadian rhythm by mediating phosphorylation of CRY1, leading to destabilize it. May regulate the Wnt signaling pathway by phosphorylating CTNNB1, leading to stabilize it. Also acts as a regulator of cellular polarity by remodeling the actin cytoskeleton; probably by indirectly activating myosin. Also phosphorylates CFTR, EEF2K, KLC1, NOS3 and SLC12A1. Plays an important role in the differential regulation of pro-autophagy (composed of PIK3C3, BECN1, PIK3R4 and UVRAG or ATG14) and non-autophagy (composed of PIK3C3, BECN1 and PIK3R4) complexes, in response to glucose starvation. Can inhibit the non-autophagy complex by phosphorylating PIK3C3 and can activate the pro-autophagy complex by phosphorylating BECN1. Upon glucose starvation, promotes ARF6 activation in a kinase-independent manner leading to cell migration. Upon glucose deprivation mediates the phosphorylation of ACSS2 at 'Ser-659', which exposes the nuclear localization signal of ACSS2, required for its interaction with KPNA1 and nuclear translocation. Upon stress, regulates mitochondrial fragmentation through phosphorylation of MTFR1L. The protein is 5'-AMP-activated protein kinase catalytic subunit alpha-2 of Homo sapiens (Human).